The primary structure comprises 383 residues: Acetylornithine deacetylase (383 aa).

Residue His80 coordinates Zn(2+). The active site involves Asp82. Asp112 contacts Zn(2+). Glu144 is an active-site residue. Zn(2+) is bound by residues Glu145, Glu169, and His355.

It belongs to the peptidase M20A family. ArgE subfamily. In terms of assembly, homodimer. Requires Zn(2+) as cofactor. Co(2+) is required as a cofactor. It depends on glutathione as a cofactor.

It is found in the cytoplasm. It carries out the reaction N(2)-acetyl-L-ornithine + H2O = L-ornithine + acetate. Its pathway is amino-acid biosynthesis; L-arginine biosynthesis; L-ornithine from N(2)-acetyl-L-ornithine (linear): step 1/1. Catalyzes the hydrolysis of the amide bond of N(2)-acetylated L-amino acids. Cleaves the acetyl group from N-acetyl-L-ornithine to form L-ornithine, an intermediate in L-arginine biosynthesis pathway, and a branchpoint in the synthesis of polyamines. The chain is Acetylornithine deacetylase from Shigella sonnei (strain Ss046).